Consider the following 353-residue polypeptide: DNA-directed RNA polymerase subunit alpha (353 aa).

The tract at residues 1–245 (MEKIQKITYK…AHFQIIGNIN (245 aa)) is alpha N-terminal domain (alpha-NTD). The segment at 261–353 (EREIKSTTPI…QLNNSEEGEE (93 aa)) is alpha C-terminal domain (alpha-CTD).

It belongs to the RNA polymerase alpha chain family. Homodimer. The RNAP catalytic core consists of 2 alpha, 1 beta, 1 beta' and 1 omega subunit. When a sigma factor is associated with the core the holoenzyme is formed, which can initiate transcription.

The catalysed reaction is RNA(n) + a ribonucleoside 5'-triphosphate = RNA(n+1) + diphosphate. Its function is as follows. DNA-dependent RNA polymerase catalyzes the transcription of DNA into RNA using the four ribonucleoside triphosphates as substrates. The protein is DNA-directed RNA polymerase subunit alpha of Mycoplasma sp.